A 219-amino-acid chain; its full sequence is Small ribosomal subunit protein uS2m (219 aa).

Belongs to the universal ribosomal protein uS2 family. As to quaternary structure, component of the mitochondrial ribosome small subunit.

Its subcellular location is the mitochondrion. In Arabidopsis thaliana (Mouse-ear cress), this protein is Small ribosomal subunit protein uS2m (RPS2).